The sequence spans 92 residues: MLRIVPRNIFILFIIAYRKIISPMYGPVCKYYPSCSEYCQNSIANNGVFLGAAYTFMRLVRCNPWSKGGVDMPRVSTKYRVNKFGFASRKNV.

Belongs to the UPF0161 family.

It is found in the cell membrane. Could be involved in insertion of integral membrane proteins into the membrane. This chain is Putative membrane protein insertion efficiency factor, found in Tropheryma whipplei (strain TW08/27) (Whipple's bacillus).